Consider the following 372-residue polypeptide: Cyanuric acid amidohydrolase (372 aa).

The RU A stretch occupies residues 1-105 (MPTTLRRAHV…IVFEAREVDE (105 aa)). Substrate is bound by residues Arg56 and 84 to 85 (SG). The segment at 115-252 (SLALGRARTP…HEIMVAGMSR (138 aa)) is RU B. Lys165 is a catalytic residue. Residues Arg197 and 235 to 236 (SG) contribute to the substrate site. Ser235 serves as the catalytic Nucleophile. Positions 258–372 (LAIDHGVMRD…GPVAIIVERT (115 aa)) are RU C. Glu305 provides a ligand contact to Mg(2+). Residues Arg332 and 351-352 (SG) contribute to the substrate site. Positions 354, 357, 358, 359, and 362 each coordinate Mg(2+).

It belongs to the cyclic amide hydrolase (CyAH) family. In terms of assembly, homotetramer.

The catalysed reaction is cyanurate + H2O = 1-carboxybiuret + H(+). The protein operates within xenobiotic degradation; atrazine degradation; biuret from cyanurate: step 1/1. With respect to regulation, inhibited by barbituric acid. Functionally, responsible for the hydrolysis of cyanuric acid, an intermediate formed during catabolism of s-triazine based compounds in herbicides such as atrazine and polymers such as melamine. Catalyzes the hydrolytic opening of the s-triazine ring of cyanuric acid (2,4,6-trihydroxy-s-triazine) to yield carbon dioxide and carboxybiuret, which spontaneously decarboxylates to biuret. The sequence is that of Cyanuric acid amidohydrolase from Bradyrhizobium sp. (strain ORS 375).